A 298-amino-acid polypeptide reads, in one-letter code: Protease HtpX homolog (298 aa).

A run of 2 helical transmembrane segments spans residues 5–25 (IFLF…VLSV) and 45–65 (MALL…SLAI). Zn(2+) is bound at residue His155. The active site involves Glu156. A Zn(2+)-binding site is contributed by His159. The next 2 helical transmembrane spans lie at 170–190 (LLQG…AWIA) and 204–224 (FIAM…VVFA). Glu230 contacts Zn(2+).

This sequence belongs to the peptidase M48B family. It depends on Zn(2+) as a cofactor.

The protein localises to the cell membrane. In Bacillus subtilis (strain 168), this protein is Protease HtpX homolog.